We begin with the raw amino-acid sequence, 114 residues long: Large ribosomal subunit protein uL22c (114 aa).

This sequence belongs to the universal ribosomal protein uL22 family. In terms of assembly, part of the 50S ribosomal subunit.

The protein localises to the plastid. The protein resides in the chloroplast. This protein binds specifically to 23S rRNA. In terms of biological role, the globular domain of the protein is located near the polypeptide exit tunnel on the outside of the subunit, while an extended beta-hairpin is found that lines the wall of the exit tunnel in the center of the 70S ribosome. This Gracilaria tenuistipitata (Red alga) protein is Large ribosomal subunit protein uL22c (rpl22).